The sequence spans 226 residues: MYTLIIPAAGQGKRMGAGKNKLFLLINEVPIIVHTLRAFEKDEACEKIIMAINEQERSDFEALIQKYGIRKNVQFIQGGAERQDSVYHALQYVKETEYVLVHDGARPFVTNKMIHEVLIVAKEKGASICAVPVKDTIKKVVNDAVFETVERSQLRAVQTPQGFSVALLLEAHQSAKQSGFLGTDDASLVERIGKEVGVVEGSYYNIKVTTPEDLLIAESFLHVQRR.

It belongs to the IspD/TarI cytidylyltransferase family. IspD subfamily.

It catalyses the reaction 2-C-methyl-D-erythritol 4-phosphate + CTP + H(+) = 4-CDP-2-C-methyl-D-erythritol + diphosphate. It participates in isoprenoid biosynthesis; isopentenyl diphosphate biosynthesis via DXP pathway; isopentenyl diphosphate from 1-deoxy-D-xylulose 5-phosphate: step 2/6. Functionally, catalyzes the formation of 4-diphosphocytidyl-2-C-methyl-D-erythritol from CTP and 2-C-methyl-D-erythritol 4-phosphate (MEP). This Bacillus cytotoxicus (strain DSM 22905 / CIP 110041 / 391-98 / NVH 391-98) protein is 2-C-methyl-D-erythritol 4-phosphate cytidylyltransferase.